The sequence spans 247 residues: Type III pantothenate kinase (247 aa).

An ATP-binding site is contributed by 7–14 (AIGNSRWH). Residues Y91 and 95–98 (GLDR) each bind substrate. Catalysis depends on D97, which acts as the Proton acceptor. Position 117 (D117) interacts with K(+). Residue T120 coordinates ATP.

The protein belongs to the type III pantothenate kinase family. In terms of assembly, homodimer. It depends on NH4(+) as a cofactor. Requires K(+) as cofactor.

It is found in the cytoplasm. It catalyses the reaction (R)-pantothenate + ATP = (R)-4'-phosphopantothenate + ADP + H(+). The protein operates within cofactor biosynthesis; coenzyme A biosynthesis; CoA from (R)-pantothenate: step 1/5. Its function is as follows. Catalyzes the phosphorylation of pantothenate (Pan), the first step in CoA biosynthesis. This Synechococcus sp. (strain ATCC 27144 / PCC 6301 / SAUG 1402/1) (Anacystis nidulans) protein is Type III pantothenate kinase.